The chain runs to 147 residues: Large ribosomal subunit protein bL9 (147 aa).

Belongs to the bacterial ribosomal protein bL9 family.

Its function is as follows. Binds to the 23S rRNA. The chain is Large ribosomal subunit protein bL9 from Marinomonas sp. (strain MWYL1).